Reading from the N-terminus, the 160-residue chain is SsrA-binding protein (160 aa).

Belongs to the SmpB family.

The protein resides in the cytoplasm. Functionally, required for rescue of stalled ribosomes mediated by trans-translation. Binds to transfer-messenger RNA (tmRNA), required for stable association of tmRNA with ribosomes. tmRNA and SmpB together mimic tRNA shape, replacing the anticodon stem-loop with SmpB. tmRNA is encoded by the ssrA gene; the 2 termini fold to resemble tRNA(Ala) and it encodes a 'tag peptide', a short internal open reading frame. During trans-translation Ala-aminoacylated tmRNA acts like a tRNA, entering the A-site of stalled ribosomes, displacing the stalled mRNA. The ribosome then switches to translate the ORF on the tmRNA; the nascent peptide is terminated with the 'tag peptide' encoded by the tmRNA and targeted for degradation. The ribosome is freed to recommence translation, which seems to be the essential function of trans-translation. The polypeptide is SsrA-binding protein (Enterobacter sp. (strain 638)).